Consider the following 530-residue polypeptide: Glucose-6-phosphate isomerase (530 aa).

The active-site Proton donor is Glu-322. Residues His-351 and Lys-455 contribute to the active site.

The protein belongs to the GPI family.

It localises to the cytoplasm. The catalysed reaction is alpha-D-glucose 6-phosphate = beta-D-fructose 6-phosphate. Its pathway is carbohydrate biosynthesis; gluconeogenesis. It participates in carbohydrate degradation; glycolysis; D-glyceraldehyde 3-phosphate and glycerone phosphate from D-glucose: step 2/4. Functionally, catalyzes the reversible isomerization of glucose-6-phosphate to fructose-6-phosphate. The sequence is that of Glucose-6-phosphate isomerase from Geobacter sp. (strain M21).